The chain runs to 257 residues: Adenosylcobinamide-GDP ribazoletransferase (257 aa).

The next 6 helical transmembrane spans lie at 4–24 (AVRG…WWLG), 40–60 (VVGL…QWFF), 64–84 (FVVQ…LLHL), 116–136 (AAVA…AALL), 140–160 (AALA…ALLI), and 193–213 (LFVT…VVAV).

This sequence belongs to the CobS family. Mg(2+) is required as a cofactor.

It localises to the cell inner membrane. The catalysed reaction is alpha-ribazole + adenosylcob(III)inamide-GDP = adenosylcob(III)alamin + GMP + H(+). The enzyme catalyses alpha-ribazole 5'-phosphate + adenosylcob(III)inamide-GDP = adenosylcob(III)alamin 5'-phosphate + GMP + H(+). Its pathway is cofactor biosynthesis; adenosylcobalamin biosynthesis; adenosylcobalamin from cob(II)yrinate a,c-diamide: step 7/7. Its function is as follows. Joins adenosylcobinamide-GDP and alpha-ribazole to generate adenosylcobalamin (Ado-cobalamin). Also synthesizes adenosylcobalamin 5'-phosphate from adenosylcobinamide-GDP and alpha-ribazole 5'-phosphate. In Alkalilimnicola ehrlichii (strain ATCC BAA-1101 / DSM 17681 / MLHE-1), this protein is Adenosylcobinamide-GDP ribazoletransferase.